The sequence spans 177 residues: Transcription factor E (177 aa).

One can recognise an HTH TFE/IIEalpha-type domain in the interval Val-9–Leu-91.

The protein belongs to the TFE family. In terms of assembly, monomer. Interaction with RNA polymerase subunits RpoF and RpoE is necessary for Tfe stimulatory transcription activity. Able to interact with Tbp and RNA polymerase in the absence of DNA promoter. Interacts both with the preinitiation and elongation complexes.

In terms of biological role, transcription factor that plays a role in the activation of archaeal genes transcribed by RNA polymerase. Facilitates transcription initiation by enhancing TATA-box recognition by TATA-box-binding protein (Tbp), and transcription factor B (Tfb) and RNA polymerase recruitment. Not absolutely required for transcription in vitro, but particularly important in cases where Tbp or Tfb function is not optimal. It dynamically alters the nucleic acid-binding properties of RNA polymerases by stabilizing the initiation complex and destabilizing elongation complexes. Seems to translocate with the RNA polymerase following initiation and acts by binding to the non template strand of the transcription bubble in elongation complexes. This Archaeoglobus fulgidus (strain ATCC 49558 / DSM 4304 / JCM 9628 / NBRC 100126 / VC-16) protein is Transcription factor E.